The primary structure comprises 115 residues: Evasin P1181 (115 aa).

The first 25 residues, 1-25, serve as a signal peptide directing secretion; it reads MALNWSFRVIFVSAMWCALLKFATL. 4 disulfides stabilise this stretch: cysteine 38–cysteine 58, cysteine 54–cysteine 94, cysteine 70–cysteine 99, and cysteine 89–cysteine 108. Residues asparagine 45, asparagine 72, and asparagine 103 are each glycosylated (N-linked (GlcNAc...) asparagine).

The protein localises to the secreted. Salivary chemokine-binding protein which binds to host chemokines CCL3 and CCL4. The protein is Evasin P1181 of Amblyomma maculatum (Gulf Coast tick).